Here is a 34-residue protein sequence, read N- to C-terminus: Dermaseptin-H5 (34 aa).

In terms of tissue distribution, expressed by the skin glands.

It is found in the secreted. Functionally, has antimicrobial activity. The sequence is that of Dermaseptin-H5 from Pithecopus hypochondrialis (Orange-legged leaf frog).